Consider the following 316-residue polypeptide: HPr kinase/phosphorylase (316 aa).

Residues H146 and K167 contribute to the active site. An ATP-binding site is contributed by G161–S168. S168 contributes to the Mg(2+) binding site. The active-site Proton acceptor; for phosphorylation activity. Proton donor; for dephosphorylation activity is D185. An important for the catalytic mechanism of both phosphorylation and dephosphorylation region spans residues L209–D218. A Mg(2+)-binding site is contributed by E210. R252 is an active-site residue. The tract at residues Q273–R278 is important for the catalytic mechanism of dephosphorylation.

Belongs to the HPrK/P family. Homohexamer. Requires Mg(2+) as cofactor.

It catalyses the reaction [HPr protein]-L-serine + ATP = [HPr protein]-O-phospho-L-serine + ADP + H(+). The enzyme catalyses [HPr protein]-O-phospho-L-serine + phosphate + H(+) = [HPr protein]-L-serine + diphosphate. In terms of biological role, catalyzes the ATP- as well as the pyrophosphate-dependent phosphorylation of a specific serine residue in HPr, a phosphocarrier protein of the phosphoenolpyruvate-dependent sugar phosphotransferase system (PTS). HprK/P also catalyzes the pyrophosphate-producing, inorganic phosphate-dependent dephosphorylation (phosphorolysis) of seryl-phosphorylated HPr (P-Ser-HPr). The polypeptide is HPr kinase/phosphorylase (Polaromonas sp. (strain JS666 / ATCC BAA-500)).